The following is a 144-amino-acid chain: Transcriptional regulator SlyA (144 aa).

Residues 2–135 (ESTLGSDLAR…LVGLIGKLEQ (134 aa)) enclose the HTH marR-type domain. Positions 49-72 (QIQLAKAIGIEQPSLVRTLDQLEE) form a DNA-binding region, H-T-H motif.

This sequence belongs to the SlyA family. As to quaternary structure, homodimer.

Functionally, transcription regulator that can specifically activate or repress expression of target genes. This chain is Transcriptional regulator SlyA, found in Serratia proteamaculans (strain 568).